Reading from the N-terminus, the 127-residue chain is Major sperm protein 19/31/40/45/50/51/53/59/61/65/81/113/142 (127 aa).

The residue at position 2 (A2) is an N-acetylalanine. The MSP domain maps to 9-126 (DIQTQPGTKI…RRKNLPIEYN (118 aa)).

As to quaternary structure, helical subfilaments are built from MSP dimers; filaments are formed from two subfilaments coiling round one another; and filaments themselves supercoil to produce bundles. In terms of tissue distribution, sperm.

The protein resides in the cell projection. The protein localises to the pseudopodium. It localises to the cytoplasm. Its subcellular location is the cytoskeleton. In terms of biological role, central component in molecular interactions underlying sperm crawling. Forms an extensive filament system that extends from sperm villipoda, along the leading edge of the pseudopod. This is Major sperm protein 19/31/40/45/50/51/53/59/61/65/81/113/142 (msp-19) from Caenorhabditis elegans.